Consider the following 129-residue polypeptide: Glycophorin-A (129 aa).

Residues 1-17 (MYEKIVIVLLLSGYIST) form the signal peptide. Q18 carries the post-translational modification Pyrrolidone carboxylic acid. Over 18–82 (QDVTEIIPHE…QLVHIFSEPV (65 aa)) the chain is Extracellular. Residues S29 and S30 are each glycosylated (O-linked (GalNAc...) serine). An O-linked (GalNAc...) threonine glycan is attached at T34. S40 is a glycosylation site (O-linked (GalNAc...) serine). T41 and T48 each carry an O-linked (GalNAc...) threonine glycan. S56 carries an O-linked (GalNAc...) serine glycan. A helical membrane pass occupies residues 83–103 (IIGIIYAVMLGIIITILSIAF). Over 104–129 (CIGQLTKKSSLPAQVASPEDVDPEVL) the chain is Cytoplasmic.

This sequence belongs to the glycophorin-A family. In terms of assembly, homodimer. Component of the ankyrin-1 complex in the erythrocyte, composed of ANK1, RHCE, RHAG, SLC4A1, EPB42, GYPA, GYPB and AQP1. Interacts with SLC4A1; a GYPA monomer is bound at each end of the SLC4A1 dimer forming a heterotetramer.

The protein resides in the membrane. Component of the ankyrin-1 complex, a multiprotein complex involved in the stability and shape of the erythrocyte membrane. Glycophorin A is the major intrinsic membrane protein of the erythrocyte. The N-terminal glycosylated segment, which lies outside the erythrocyte membrane, has MN blood group receptors. Appears to be important for the function of SLC4A1 and is required for high activity of SLC4A1. May be involved in translocation of SLC4A1 to the plasma membrane. In Canis lupus familiaris (Dog), this protein is Glycophorin-A.